Reading from the N-terminus, the 1134-residue chain is Phytochrome 1 (1134 aa).

Residues 219–401 (DIGLLCDTVV…VFGLQLNMEA (183 aa)) enclose the GAF domain. C324 is a binding site for phytochromobilin. Residues 616 to 687 (VANEMVRLIE…RLLYLALQGD (72 aa)) enclose the PAS 1 domain. Residues 690–746 (QNVELKLKTFGGQKDKEAVILVVNACASRDVSDNVVGVCFVGQDVTGQKVVMDKFTR) enclose the PAC domain. The PAS 2 domain maps to 750–821 (DYKAIVQNPN…KGQDAVTKFM (72 aa)). In terms of domain architecture, Histidine kinase spans 901 to 1121 (YIRQEIKNPL…LVSLELPLAQ (221 aa)).

It belongs to the phytochrome family. Homodimer. Contains one covalently linked phytochromobilin chromophore.

In terms of biological role, regulatory photoreceptor which exists in two forms that are reversibly interconvertible by light: the Pr form that absorbs maximally in the red region of the spectrum and the Pfr form that absorbs maximally in the far-red region. Photoconversion of Pr to Pfr induces an array of morphogenic responses, whereas reconversion of Pfr to Pr cancels the induction of those responses. Pfr controls the expression of a number of nuclear genes including those encoding the small subunit of ribulose-bisphosphate carboxylase, chlorophyll A/B binding protein, protochlorophyllide reductase, rRNA, etc. It also controls the expression of its own gene(s) in a negative feedback fashion. The sequence is that of Phytochrome 1 (PHY1) from Selaginella martensii (Martens's spike moss).